Reading from the N-terminus, the 408-residue chain is LL-diaminopimelate aminotransferase (408 aa).

Residues tyrosine 15 and glycine 42 each contribute to the substrate site. Residues tyrosine 72, 108 to 109, tyrosine 132, asparagine 187, tyrosine 218, and 246 to 248 contribute to the pyridoxal 5'-phosphate site; these read SK and SFS. Substrate contacts are provided by lysine 109, tyrosine 132, and asparagine 187. Lysine 249 carries the post-translational modification N6-(pyridoxal phosphate)lysine. 2 residues coordinate pyridoxal 5'-phosphate: arginine 257 and asparagine 292. Substrate contacts are provided by asparagine 292 and arginine 388.

It belongs to the class-I pyridoxal-phosphate-dependent aminotransferase family. LL-diaminopimelate aminotransferase subfamily. As to quaternary structure, homodimer. Requires pyridoxal 5'-phosphate as cofactor.

The enzyme catalyses (2S,6S)-2,6-diaminopimelate + 2-oxoglutarate = (S)-2,3,4,5-tetrahydrodipicolinate + L-glutamate + H2O + H(+). It participates in amino-acid biosynthesis; L-lysine biosynthesis via DAP pathway; LL-2,6-diaminopimelate from (S)-tetrahydrodipicolinate (aminotransferase route): step 1/1. Involved in the synthesis of meso-diaminopimelate (m-DAP or DL-DAP), required for both lysine and peptidoglycan biosynthesis. Catalyzes the direct conversion of tetrahydrodipicolinate to LL-diaminopimelate. This is LL-diaminopimelate aminotransferase from Prochlorococcus marinus (strain MIT 9313).